The primary structure comprises 486 residues: Vicilin-like seed storage protein At3g22640 (486 aa).

Residues 1-22 form the signal peptide; sequence MAITNKLIITLLLLISIAVVHC. The segment at 34–60 is disordered; the sequence is PPQQGEQEGPRRRPGGGSGEGWEEEST. Cupin type-1 domains lie at 64-223 and 278-448; these read YHFR…ELLG and FNLF…KVAE. N-linked (GlcNAc...) asparagine glycosylation is found at Asn-168, Asn-316, and Asn-455.

Belongs to the 7S seed storage protein family. In terms of tissue distribution, predominantly expressed in the embryo and endosperm of developing seeds. Also present in seedlings.

In terms of biological role, seed storage protein. Its function is as follows. (Microbial infection) Involved in tobacco mosaic virus (TMV) replication. Required for endoplasmic reticulum (ER) aggregations mediated by TMV main replicase (P126) upon viral infection. The polypeptide is Vicilin-like seed storage protein At3g22640 (Arabidopsis thaliana (Mouse-ear cress)).